A 330-amino-acid polypeptide reads, in one-letter code: Apolipoprotein E (330 aa).

The signal sequence occupies residues 1-18 (MKVLWAALVVALLAGCWA). Residues 21–43 (EPESPLQGKPEPELEPELEPKRE) are disordered. 7 consecutive repeat copies span residues 96-117 (TLME…EQLG), 118-139 (PMAS…ARLR), 140-161 (SDME…AMLG), 162-183 (QSTE…KRVL), 184-205 (RDAE…EGAE), 206-227 (RSVS…TRHA), and 247-268 (GRLE…EQME). Positions 96–268 (TLMEETMKEI…HLDEVREQME (173 aa)) are 7 X 22 AA approximate tandem repeats. Residue Met-159 is modified to Methionine sulfoxide. Phosphoserine is present on Ser-163. Residues 174–184 (HMRKLRKRVLR) are LDL and other lipoprotein receptors binding. 178–181 (LRKR) lines the heparin pocket. The lipid-binding and lipoprotein association stretch occupies residues 226–303 (HANLATQPLR…SWFEPLVEDM (78 aa)). 242–249 (GQQLRGRL) contacts heparin. A homooligomerization region spans residues 279–330 (NQMRQQVEAFQARLKSWFEPLVEDMQRQWAGLVEKVQVAVGTSPTTPPLETK). The segment at 291-303 (RLKSWFEPLVEDM) is specificity for association with VLDL.

The protein belongs to the apolipoprotein A1/A4/E family. In terms of assembly, homotetramer. May interact with ABCA1; functionally associated with ABCA1 in the biogenesis of HDLs. May interact with APP/A4 amyloid-beta peptide; the interaction is extremely stable in vitro but its physiological significance is unclear. May interact with MAPT. May interact with MAP2. In the cerebrospinal fluid, interacts with secreted SORL1. Interacts with PMEL; this allows the loading of PMEL luminal fragment on ILVs to induce fibril nucleation. In terms of processing, APOE exists as multiple glycosylated and sialylated glycoforms within cells and in plasma. The extent of glycosylation and sialylation are tissue and context specific. Glycated in plasma VLDL. Post-translationally, phosphorylated by FAM20C in the extracellular medium.

The protein resides in the secreted. It is found in the extracellular space. The protein localises to the extracellular matrix. Its subcellular location is the extracellular vesicle. It localises to the endosome. The protein resides in the multivesicular body. APOE is an apolipoprotein, a protein associating with lipid particles, that mainly functions in lipoprotein-mediated lipid transport between organs via the plasma and interstitial fluids. APOE is a core component of plasma lipoproteins and is involved in their production, conversion and clearance. Apolipoproteins are amphipathic molecules that interact both with lipids of the lipoprotein particle core and the aqueous environment of the plasma. As such, APOE associates with chylomicrons, chylomicron remnants, very low density lipoproteins (VLDL) and intermediate density lipoproteins (IDL) but shows a preferential binding to high-density lipoproteins (HDL). It also binds a wide range of cellular receptors including the LDL receptor/LDLR, the LDL receptor-related proteins LRP1, LRP2 and LRP8 and the very low-density lipoprotein receptor/VLDLR that mediate the cellular uptake of the APOE-containing lipoprotein particles. Finally, APOE also has a heparin-binding activity and binds heparan-sulfate proteoglycans on the surface of cells, a property that supports the capture and the receptor-mediated uptake of APOE-containing lipoproteins by cells. A main function of APOE is to mediate lipoprotein clearance through the uptake of chylomicrons, VLDLs, and HDLs by hepatocytes. APOE is also involved in the biosynthesis by the liver of VLDLs as well as their uptake by peripheral tissues ensuring the delivery of triglycerides and energy storage in muscle, heart and adipose tissues. By participating in the lipoprotein-mediated distribution of lipids among tissues, APOE plays a critical role in plasma and tissues lipid homeostasis. APOE is also involved in two steps of reverse cholesterol transport, the HDLs-mediated transport of cholesterol from peripheral tissues to the liver, and thereby plays an important role in cholesterol homeostasis. First, it is functionally associated with ABCA1 in the biogenesis of HDLs in tissues. Second, it is enriched in circulating HDLs and mediates their uptake by hepatocytes. APOE also plays an important role in lipid transport in the central nervous system, regulating neuron survival and sprouting. This chain is Apolipoprotein E (APOE), found in Neomonachus schauinslandi (Hawaiian monk seal).